A 125-amino-acid chain; its full sequence is Ribosome-binding factor A (125 aa).

It belongs to the RbfA family. In terms of assembly, monomer. Binds 30S ribosomal subunits, but not 50S ribosomal subunits or 70S ribosomes.

It localises to the cytoplasm. Functionally, one of several proteins that assist in the late maturation steps of the functional core of the 30S ribosomal subunit. Associates with free 30S ribosomal subunits (but not with 30S subunits that are part of 70S ribosomes or polysomes). Required for efficient processing of 16S rRNA. May interact with the 5'-terminal helix region of 16S rRNA. This Acidovorax sp. (strain JS42) protein is Ribosome-binding factor A.